Consider the following 333-residue polypeptide: Anthranilate phosphoribosyltransferase (333 aa).

5-phospho-alpha-D-ribose 1-diphosphate-binding positions include Gly81, 84–85 (GD), Thr89, 91–94 (NIST), 109–117 (KHGNRSVSS), and Ser121. Gly81 contributes to the anthranilate binding site. Ser93 lines the Mg(2+) pocket. Asn112 is an anthranilate binding site. Arg167 is a binding site for anthranilate. Asp225 and Glu226 together coordinate Mg(2+).

It belongs to the anthranilate phosphoribosyltransferase family. In terms of assembly, homodimer. Requires Mg(2+) as cofactor.

The catalysed reaction is N-(5-phospho-beta-D-ribosyl)anthranilate + diphosphate = 5-phospho-alpha-D-ribose 1-diphosphate + anthranilate. Its pathway is amino-acid biosynthesis; L-tryptophan biosynthesis; L-tryptophan from chorismate: step 2/5. Catalyzes the transfer of the phosphoribosyl group of 5-phosphorylribose-1-pyrophosphate (PRPP) to anthranilate to yield N-(5'-phosphoribosyl)-anthranilate (PRA). This Glaesserella parasuis serovar 5 (strain SH0165) (Haemophilus parasuis) protein is Anthranilate phosphoribosyltransferase.